A 699-amino-acid polypeptide reads, in one-letter code: DNA topoisomerase 1 (699 aa).

2 stretches are compositionally biased toward basic and acidic residues: residues 1–15 (MAKS…KNEL) and 22–35 (IELK…ESKG). The tract at residues 1-37 (MAKSKVVEKDKKNELDNQSADIELKGQSKNEESKGGK) is disordered. Positions 38 to 146 (KKVIIVESPA…NIITFTEITE (109 aa)) constitute a Toprim domain. The Mg(2+) site is built by E44 and D115. A Topo IA-type catalytic domain is found at 160 to 583 (DMNKVNAQLA…SFLKEFNKDL (424 aa)). The tract at residues 194–199 (SAGRVQ) is interaction with DNA. Residue Y324 is the O-(5'-phospho-DNA)-tyrosine intermediate of the active site. The C4-type zinc-finger motif lies at 601-624 (CEDCSGNYKLKVGKYGLYLHCPNC). Positions 649-699 (QESQEENGEKNSVQSEESSANSGNRKFYRKRRTSGSKKSSTKSASSKAKKK) are disordered. Residues 661 to 672 (VQSEESSANSGN) are compositionally biased toward polar residues. Over residues 674–683 (KFYRKRRTSG) the composition is skewed to basic residues. Positions 684 to 699 (SKKSSTKSASSKAKKK) are enriched in low complexity.

It belongs to the type IA topoisomerase family. As to quaternary structure, monomer. It depends on Mg(2+) as a cofactor.

It carries out the reaction ATP-independent breakage of single-stranded DNA, followed by passage and rejoining.. Its function is as follows. Releases the supercoiling and torsional tension of DNA, which is introduced during the DNA replication and transcription, by transiently cleaving and rejoining one strand of the DNA duplex. Introduces a single-strand break via transesterification at a target site in duplex DNA. The scissile phosphodiester is attacked by the catalytic tyrosine of the enzyme, resulting in the formation of a DNA-(5'-phosphotyrosyl)-enzyme intermediate and the expulsion of a 3'-OH DNA strand. The free DNA strand then undergoes passage around the unbroken strand, thus removing DNA supercoils. Finally, in the religation step, the DNA 3'-OH attacks the covalent intermediate to expel the active-site tyrosine and restore the DNA phosphodiester backbone. This chain is DNA topoisomerase 1, found in Fervidobacterium islandicum.